The chain runs to 426 residues: UPF0597 protein CLB_1750 (426 aa).

It belongs to the UPF0597 family.

This Clostridium botulinum (strain ATCC 19397 / Type A) protein is UPF0597 protein CLB_1750.